The primary structure comprises 371 residues: Dual-specificity RNA methyltransferase RlmN (371 aa).

The active-site Proton acceptor is E86. Residues 105-338 (RHARYTICVS…CTIRQSKGLD (234 aa)) form the Radical SAM core domain. A disulfide bridge connects residues C112 and C343. The [4Fe-4S] cluster site is built by C119, C123, and C126. Residues 169–170 (GE), S201, 224–226 (SLH), and N300 contribute to the S-adenosyl-L-methionine site. The S-methylcysteine intermediate role is filled by C343. Over residues 348-363 (QRSQNLSPSNNNTSKP) the composition is skewed to polar residues. The tract at residues 348-371 (QRSQNLSPSNNNTSKPSDIKKSES) is disordered.

Belongs to the radical SAM superfamily. RlmN family. [4Fe-4S] cluster is required as a cofactor.

It is found in the cytoplasm. The catalysed reaction is adenosine(2503) in 23S rRNA + 2 reduced [2Fe-2S]-[ferredoxin] + 2 S-adenosyl-L-methionine = 2-methyladenosine(2503) in 23S rRNA + 5'-deoxyadenosine + L-methionine + 2 oxidized [2Fe-2S]-[ferredoxin] + S-adenosyl-L-homocysteine. The enzyme catalyses adenosine(37) in tRNA + 2 reduced [2Fe-2S]-[ferredoxin] + 2 S-adenosyl-L-methionine = 2-methyladenosine(37) in tRNA + 5'-deoxyadenosine + L-methionine + 2 oxidized [2Fe-2S]-[ferredoxin] + S-adenosyl-L-homocysteine. In terms of biological role, specifically methylates position 2 of adenine 2503 in 23S rRNA and position 2 of adenine 37 in tRNAs. m2A2503 modification seems to play a crucial role in the proofreading step occurring at the peptidyl transferase center and thus would serve to optimize ribosomal fidelity. The protein is Dual-specificity RNA methyltransferase RlmN of Campylobacter curvus (strain 525.92).